A 641-amino-acid chain; its full sequence is Macrolide export ATP-binding/permease protein MacB (641 aa).

Residues 2 to 236 enclose the ABC transporter domain; it reads IFLKNICKNI…LILKTMPKEK (235 aa). An ATP-binding site is contributed by 34–41; the sequence is GQSGSGKT. A run of 4 helical transmembrane segments spans residues 265-285, 519-539, 571-591, and 604-624; these read ILTM…VALG, ACVA…IMLV, MICT…IFAF, and AYSV…FGFF.

The protein belongs to the ABC transporter superfamily. Macrolide exporter (TC 3.A.1.122) family. Homodimer.

The protein localises to the cell inner membrane. In terms of biological role, non-canonical ABC transporter that contains transmembrane domains (TMD), which form a pore in the inner membrane, and an ATP-binding domain (NBD), which is responsible for energy generation. Confers resistance against macrolides. In Campylobacter jejuni subsp. jejuni serotype O:2 (strain ATCC 700819 / NCTC 11168), this protein is Macrolide export ATP-binding/permease protein MacB.